The primary structure comprises 230 residues: Ureidoacrylate amidohydrolase RutB (230 aa).

Aspartate 24 acts as the Proton acceptor in catalysis. Lysine 133 is an active-site residue. Catalysis depends on cysteine 166, which acts as the Nucleophile.

This sequence belongs to the isochorismatase family. RutB subfamily.

The enzyme catalyses (Z)-3-ureidoacrylate + H2O + H(+) = (Z)-3-aminoacrylate + NH4(+) + CO2. It catalyses the reaction (Z)-3-ureidoacrylate + H2O = (Z)-3-aminoacrylate + carbamate + H(+). The catalysed reaction is (Z)-2-methylureidoacrylate + H2O + H(+) = (Z)-2-methylaminoacrylate + NH4(+) + CO2. Hydrolyzes ureidoacrylate to form aminoacrylate and carbamate. The carbamate hydrolyzes spontaneously, thereby releasing one of the nitrogen atoms of the pyrimidine ring as ammonia and one of its carbon atoms as CO2. This chain is Ureidoacrylate amidohydrolase RutB, found in Escherichia coli O111:H- (strain 11128 / EHEC).